A 601-amino-acid polypeptide reads, in one-letter code: Ubiquitin carboxyl-terminal hydrolase MINDY-2 (601 aa).

The interval 1–205 (MENSPDSPQP…LCKEEEEDPA (205 aa)) is disordered. Positions 24–34 (EGRRRGGREAE) are enriched in basic and acidic residues. Phosphothreonine is present on threonine 62. Residue serine 82 is modified to Phosphoserine. 3 stretches are compositionally biased toward low complexity: residues 127-141 (EEPS…SCSE), 148-169 (SPSL…SSEF), and 186-195 (GAAGPPRAAP). Cysteine 244 functions as the Nucleophile in the catalytic mechanism. Histidine 426 acts as the Proton acceptor in catalysis. The segment at 485–537 (GQQDQIDQDYLMALSLQQEQQSQEINWEQIPEGISDLELAKKLQEEEDRRASQ) is ubiquitin-binding domain (UBD). The tract at residues 534–601 (RASQYYQEQE…EKEKNSCVIL (68 aa)) is disordered. Low complexity predominate over residues 536–570 (SQYYQEQEQAQAVVTTTTPSTQAQQGQPAQASPSS). A compositionally biased stretch (basic and acidic residues) spans 577 to 601 (SERKRKEPREKDKEKEKEKNSCVIL).

This sequence belongs to the MINDY deubiquitinase family. FAM63 subfamily.

The enzyme catalyses Thiol-dependent hydrolysis of ester, thioester, amide, peptide and isopeptide bonds formed by the C-terminal Gly of ubiquitin (a 76-residue protein attached to proteins as an intracellular targeting signal).. In terms of biological role, hydrolase that can remove 'Lys-48'-linked conjugated ubiquitin from proteins. Can also bind to polyubiquitin chains of different linkage types, including 'Lys-6', 'Lys-11', 'Lys-29', 'Lys-33' and 'Lys-63'. May play a regulatory role at the level of protein turnover. The protein is Ubiquitin carboxyl-terminal hydrolase MINDY-2 (Mindy2) of Mus musculus (Mouse).